The chain runs to 88 residues: ATP synthase subunit c 2 (88 aa).

The next 2 helical transmembrane spans lie at 4 to 24 and 53 to 73; these read FSWVMITAGFGMAIGSLGTGI and IGLAMIESLAIYVFVVAMIIL.

It belongs to the ATPase C chain family. In terms of assembly, F-type ATPases have 2 components, F(1) - the catalytic core - and F(0) - the membrane proton channel. F(1) has five subunits: alpha(3), beta(3), gamma(1), delta(1), epsilon(1). F(0) has three main subunits: a(1), b(2) and c(10-14). The alpha and beta chains form an alternating ring which encloses part of the gamma chain. F(1) is attached to F(0) by a central stalk formed by the gamma and epsilon chains, while a peripheral stalk is formed by the delta and b chains.

It is found in the cell inner membrane. F(1)F(0) ATP synthase produces ATP from ADP in the presence of a proton or sodium gradient. F-type ATPases consist of two structural domains, F(1) containing the extramembraneous catalytic core and F(0) containing the membrane proton channel, linked together by a central stalk and a peripheral stalk. During catalysis, ATP synthesis in the catalytic domain of F(1) is coupled via a rotary mechanism of the central stalk subunits to proton translocation. Functionally, key component of the F(0) channel; it plays a direct role in translocation across the membrane. A homomeric c-ring of between 10-14 subunits forms the central stalk rotor element with the F(1) delta and epsilon subunits. This chain is ATP synthase subunit c 2, found in Syntrophotalea carbinolica (strain DSM 2380 / NBRC 103641 / GraBd1) (Pelobacter carbinolicus).